Consider the following 70-residue polypeptide: Melittin (70 aa).

Residues 1–21 form the signal peptide; it reads MKFLVNVALVFMVVYISFIYA. A propeptide spans 22-43 (removed by a dipeptidylpeptidase); that stretch reads APEPEPAPEAEAEADAEADPEA. The residue at position 44 (G44) is an N-formylglycine; partial. Residue Q69 is modified to Glutamine amide.

This sequence belongs to the melittin family. As to quaternary structure, monomer (in solution and for integration into membranes), homotetramer (in solution and potentially as a toroidal pore in membranes), and potenially homomultimer (as a toroidal pore in membranes). In terms of tissue distribution, expressed by the venom gland.

Its subcellular location is the secreted. The protein resides in the target cell membrane. Its function is as follows. Main toxin of bee venom with strong hemolytic activity and antimicrobial activity. It has enhancing effects on bee venom phospholipase A2 activity. This amphipathic toxin binds to negatively charged membrane surface and forms pore by inserting into lipid bilayers inducing the leakage of ions and molecules and the enhancement of permeability that ultimately leads to cell lysis. It acts as a voltage-gated pore with higher selectivity for anions over cations. The ion conductance has been shown to be voltage-dependent. Self-association of melittin in membranes is promoted by high ionic strength, but not by the presence of negatively charged lipids. In vivo, intradermal injection into healthy human volunteers produce sharp pain sensation and an inflammatory response. It produces pain by activating primary nociceptor cells directly and indirectly due to its ability to activate plasma membrane phospholipase A2 and its pore-forming activity. In Polistes hebraeus (Paper wasp), this protein is Melittin (MELT).